A 144-amino-acid chain; its full sequence is Transcriptional regulator SlyA (144 aa).

The 134-residue stretch at 2–135 folds into the HTH marR-type domain; the sequence is ESPLGSDLAR…LSNMIAKLEK (134 aa). The segment at residues 49 to 72 is a DNA-binding region (H-T-H motif); it reads QIQLAKAIGIEQPSLVRTLDQLEE.

Belongs to the SlyA family. Homodimer.

In terms of biological role, transcription regulator that can specifically activate or repress expression of target genes. In Sodalis glossinidius (strain morsitans), this protein is Transcriptional regulator SlyA.